Reading from the N-terminus, the 271-residue chain is Nus factor SuhB (271 aa).

The Mg(2+) site is built by Glu67, Asp86, and Leu88. Residue Glu67 participates in substrate binding. Substrate is bound by residues 88–91 (LDGT), Arg187, and Asp216.

The protein belongs to the inositol monophosphatase superfamily. Homodimer. The rRNA transcription and antitermination complex (rrnTAC) consists of RNA polymerase (RNAP), NusA, NusB, NusE (rpsJ), NusG, SubB, ribosomal protein S4, DNA and precursor rRNA; S4 is more flexible than other subunits. Interacts with the ribosome and with RNA polymerase. It depends on Mg(2+) as a cofactor.

The protein localises to the cytoplasm. The catalysed reaction is a myo-inositol phosphate + H2O = myo-inositol + phosphate. Part of the processive rRNA transcription and antitermination complex (rrnTAC). The complex forms an RNA-chaperone ring around the RNA exit tunnel of RNA polymerase (RNAP). It supports rapid transcription and antitermination of rRNA operons, cotranscriptional rRNA folding, and annealing of distal rRNA regions to allow correct ribosome biogenesis. This subunit may play a central role in organizing the structure. Its function is as follows. A ribosome-associated protein, deletion of which alters the expression of 494 genes, suggesting a role in global gene regulation. Involved in control of pathogenesis-related genes. Required for the activation of virulence factors associated with acute infections (type 3 secretion system, T3SS) while suppressing virulence factors associated with chronic infections (biofilm formation and type 6 secretion system, T6SS). It probably acts at a post-transcriptional level. The polypeptide is Nus factor SuhB (Pseudomonas aeruginosa (strain ATCC 15692 / DSM 22644 / CIP 104116 / JCM 14847 / LMG 12228 / 1C / PRS 101 / PAO1)).